The chain runs to 165 residues: Mating factor alpha-1 (165 aa).

The segment at residues 1-19 (MRFPSIFTAVLFAASSALA) is a signal peptide (or 20). 4 propeptides span residues 20–89 (APVN…EAEA), 105–110 (EAEAEA), 126–131 (EADAEA), and 147–152 (EADAEA).

Functionally, the active factor is excreted into the culture medium by haploid cells of the alpha mating type and acts on cells of the opposite mating type (type A). It mediates the conjugation process between the two types by inhibiting the initiation of DNA synthesis in type a cells and synchronizing them with type alpha. This Saccharomyces cerevisiae (strain ATCC 204508 / S288c) (Baker's yeast) protein is Mating factor alpha-1 (MF(ALPHA)1).